The primary structure comprises 666 residues: MNAYNSITPETIQEDMRYLQLLSHSFPTIADASTEIINLEAILNLPKGTEHFLADLHGEYEAFQHVLRNASGAIKRKVNEIFGNTLRENEKKELCTLIYYPEQKLDLVKAVETDLDDWYVITLNQLVRVCQNVSSKYTRSKVRKSLPKEFSYIIQELLHENSMVPNKQAYINVIISTIISTRRADDFIIALCNLIQRLTIDTLHVLGDIFDRGPAPHRIMDILCDYHNFDVQWGNHDILWMGAAAGNDCCMANVLRLAMRYGNLAALEDGYGINLLPLATFAMETYADDPCTLFGPKVEKEDCTYNAKTLRMIGQMHKAISVIQFKLEAEIIRRRPDFEMDDRMLLHRIDFERKTITMPNGKEYELKDSFLPTVNPADPYKLTDEEREIMNKLHRSFVSSEKLKKHIRCLFRYGCMYTVSNSNLLFHASIPLNADGTLKDVSIAGKMYKGKALLEKVGHLIRTAFFAEEDNEDRPFAVDYVWYLWCGKDSPAFDKDKMATFERYFLKEKELHKEVKGHYYSLRNEEKVCDMLLDEFGVIGTHRHIINGHVPVKTIQGENPIKANGKMMVIDGGFSKAYHSETGIAGYTLVYHSRGFQLVQHEPFTSMQKAIEEGQDIKSSTQIVEMSTQRMMVKDTDKGRELVTQINDLKKLLMAYRTGLIKEKSI.

This sequence belongs to the FBPase class 3 family. Mn(2+) serves as cofactor.

It carries out the reaction beta-D-fructose 1,6-bisphosphate + H2O = beta-D-fructose 6-phosphate + phosphate. It participates in carbohydrate biosynthesis; gluconeogenesis. This Phocaeicola vulgatus (strain ATCC 8482 / DSM 1447 / JCM 5826 / CCUG 4940 / NBRC 14291 / NCTC 11154) (Bacteroides vulgatus) protein is Fructose-1,6-bisphosphatase class 3.